Here is a 127-residue protein sequence, read N- to C-terminus: UPF0102 protein ERGA_CDS_00540 (127 aa).

This sequence belongs to the UPF0102 family.

This Ehrlichia ruminantium (strain Gardel) protein is UPF0102 protein ERGA_CDS_00540.